The following is a 103-amino-acid chain: Large ribosomal subunit protein bL21 (103 aa).

It belongs to the bacterial ribosomal protein bL21 family. As to quaternary structure, part of the 50S ribosomal subunit. Contacts protein L20.

Functionally, this protein binds to 23S rRNA in the presence of protein L20. This is Large ribosomal subunit protein bL21 from Methylibium petroleiphilum (strain ATCC BAA-1232 / LMG 22953 / PM1).